The primary structure comprises 453 residues: Gastrin/cholecystokinin type B receptor (453 aa).

The Extracellular segment spans residues 1 to 57; sequence MELLKLNRSAQGSGAGPGASLCRAGGALLNSSGAGNLSCEPPRLRGAGTRELELAIR. N-linked (GlcNAc...) asparagine glycans are attached at residues Asn-7, Asn-30, and Asn-36. Residues 58-79 form a helical membrane-spanning segment; it reads VTLYAVIFLMSVGGNVLIIVVL. Over 80-87 the chain is Cytoplasmic; it reads GLSRRLRT. A helical membrane pass occupies residues 88–109; that stretch reads VTNAFLLSLAVSDLLLAVACMP. At 110–131 the chain is on the extracellular side; sequence FTLLPNLMGTFIFGTVVCKAVS. A disulfide bridge links Cys-127 with Cys-206. A helical transmembrane segment spans residues 132-150; sequence YLMGVSVSVSTLSLVAIAL. The Cytoplasmic segment spans residues 151 to 170; it reads ERYSAICRPLQARVWQTRSH. Residues 171–189 traverse the membrane as a helical segment; sequence AARVIIATWMLSGLLMVPY. The Extracellular segment spans residues 190-220; sequence PVYTAVQPAGGARALQCVHRWPSARVRQTWS. The chain crosses the membrane as a helical span at residues 221–243; sequence VLLLLLLFFVPGVVMAVAYGLIS. Residues 244 to 339 lie on the Cytoplasmic side of the membrane; it reads RELYLGLRFD…KLLAKKRVVR (96 aa). The interval 258-286 is disordered; sequence SESRVRSQGGLRGGAGPGPAPPNGSCRPE. Residues 340–361 form a helical membrane-spanning segment; that stretch reads MLLVIVVLFFLCWLPLYSANTW. Over 362–379 the chain is Extracellular; sequence RAFDSSGAHRALSGAPIS. Residues 380 to 400 traverse the membrane as a helical segment; that stretch reads FIHLLSYASACVNPLVYCFMH. Residues 401-453 lie on the Cytoplasmic side of the membrane; that stretch reads RRFRQACLETCARCCPRPPRARPRPLPDEDPPTPSIASLSRLSYTTISTLGPG. Residue Cys-414 is the site of S-palmitoyl cysteine attachment. Positions 422 to 453 are disordered; sequence RPRPLPDEDPPTPSIASLSRLSYTTISTLGPG. Residues 435–453 are compositionally biased toward polar residues; sequence SIASLSRLSYTTISTLGPG.

Belongs to the G-protein coupled receptor 1 family. Parietal cells, pancreas, brain and various neoplastic tissues.

It localises to the cell membrane. In terms of biological role, receptor for gastrin and cholecystokinin. The CCK-B receptors occur throughout the central nervous system where they modulate anxiety, analgesia, arousal, and neuroleptic activity. This receptor mediates its action by association with G proteins that activate a phosphatidylinositol-calcium second messenger system. The polypeptide is Gastrin/cholecystokinin type B receptor (CCKBR) (Canis lupus familiaris (Dog)).